We begin with the raw amino-acid sequence, 69 residues long: Pleurain-A4 (69 aa).

A signal peptide spans 1-22; sequence MFTLKKTLLLLFFLGTISISLC. The propeptide occupies 23-43; the sequence is KQERDADEDDGRKMTEEEVKR. C63 and C69 are disulfide-bonded.

Belongs to the frog skin active peptide (FSAP) family. Pleurain subfamily. As to expression, expressed by the skin glands.

It is found in the secreted. Functionally, antimicrobial peptide. Has activity against Gram-positive and -negative bacteria, and fungi. Has little hemolytic activity on red blood cells. The chain is Pleurain-A4 from Nidirana pleuraden (Yunnan pond frog).